The primary structure comprises 266 residues: Interleukin-1 beta (266 aa).

The propeptide occupies 1-113; that stretch reads MATVPEPINE…ETSSDELLCD (113 aa).

The protein belongs to the IL-1 family. As to quaternary structure, monomer. In its precursor form, weakly interacts with full-length MEFV; the mature cytokine does not interact at all. Interacts with integrins ITGAV:ITGBV and ITGA5:ITGB1; integrin-binding is required for IL1B signaling. Interacts with cargo receptor TMED10; the interaction is direct and is required for the secretion of IL1B mature form. Interacts with HSP90AB1; the interaction facilitates cargo translocation into the ERGIC. Interacts with HSP90B1; the interaction facilitates cargo translocation into the ERGIC.

It localises to the cytoplasm. It is found in the cytosol. Its subcellular location is the secreted. The protein resides in the lysosome. The protein localises to the extracellular exosome. In terms of biological role, potent pro-inflammatory cytokine. Initially discovered as the major endogenous pyrogen, induces prostaglandin synthesis, neutrophil influx and activation, T-cell activation and cytokine production, B-cell activation and antibody production, and fibroblast proliferation and collagen production. Promotes Th17 differentiation of T-cells. Synergizes with IL12/interleukin-12 to induce IFNG synthesis from T-helper 1 (Th1) cells. Plays a role in angiogenesis by inducing VEGF production synergistically with TNF and IL6. Involved in transduction of inflammation downstream of pyroptosis: its mature form is specifically released in the extracellular milieu by passing through the gasdermin-D (GSDMD) pore. The protein is Interleukin-1 beta (IL1B) of Capra hircus (Goat).